The primary structure comprises 214 residues: UPF0690 protein C1orf52 homolog (214 aa).

2 disordered regions span residues 1–66 (MSDE…SVSK) and 81–214 (DSRA…QCLD). Over residues 32 to 44 (PEATASSAPAEPQ) the composition is skewed to low complexity. Composition is skewed to basic and acidic residues over residues 49-61 (RAAE…DELF) and 81-97 (DSRA…EFKV). Acidic residues predominate over residues 152 to 165 (EEEEEEQQPDSDDD). The residue at position 162 (Ser-162) is a Phosphoserine. Composition is skewed to basic and acidic residues over residues 179-192 (VETF…KRDI) and 200-214 (NFVE…QCLD).

Belongs to the UPF0690 family.

The sequence is that of UPF0690 protein C1orf52 homolog from Danio rerio (Zebrafish).